The chain runs to 113 residues: U11-theraphotoxin-Hhn1f (113 aa).

Residues 1-21 (MNTVRVTFLLVFVLAVSLGQA) form the signal peptide. Positions 22–74 (DKDENRMEMQEKTEQGKSYLDFAENLLLQKLEELEAKLLEEDSKESRNSRQKR) are excised as a propeptide. Positions 61-82 (EEDSKESRNSRQKRCIGEGVPC) are disordered. Cystine bridges form between C75–C90, C82–C95, and C89–C110.

This sequence belongs to the neurotoxin 14 (magi-1) family. 01 (HNTX-16) subfamily. In terms of tissue distribution, expressed by the venom gland.

Its subcellular location is the secreted. In terms of biological role, probable ion channel inhibitor. This Cyriopagopus hainanus (Chinese bird spider) protein is U11-theraphotoxin-Hhn1f.